The sequence spans 298 residues: Transcription factor BOA (298 aa).

Disordered stretches follow at residues 1 to 26, 79 to 143, and 206 to 232; these read MGKE…EYRI, LRSS…KRPR, and EDPY…GGGS. The segment covering 10-20 has biased composition (acidic residues); that stretch reads YGDDDGEDAGG. Residues 104–113 show a composition bias toward basic and acidic residues; that stretch reads DPKKQKKSDG. The segment covering 122–131 has biased composition (acidic residues); that stretch reads STAEEGDSGP. The segment at residues 138 to 197 is a DNA-binding region (myb-like GARP); sequence TSKRPRLVWTPQLHKRFVDVVAHLGIKNAVPKTIMQLMNVEGLTRENVASHLQKYRLYLK. Polar residues predominate over residues 209–227; that stretch reads YSSSDQLFSSTPVPPQSFQ.

It is found in the nucleus. Transcription factor that is a critical component of the regulatory circuit of the circadian clock. Binds to specific sites on CCA1 promoter leading to CCA1 activation. Is required for the rhythmic expression of other clock genes such as LHY, GI and APRR1/TOC1. This Arabidopsis thaliana (Mouse-ear cress) protein is Transcription factor BOA (BOA).